The following is a 472-amino-acid chain: Ribosomal protein uS12 methylthiotransferase RimO (472 aa).

The 114-residue stretch at 1-114 (MKFHIITLGC…IGDVVDTLQR (114 aa)) folds into the MTTase N-terminal domain. Cys10, Cys46, Cys78, Cys171, Cys175, and Cys178 together coordinate [4Fe-4S] cluster. The Radical SAM core domain maps to 157 to 388 (RITGPSAYLK…MRLQQGISRQ (232 aa)). In terms of domain architecture, TRAM spans 391–460 (RRWVGRVIRV…DYDLWGEMVE (70 aa)).

Belongs to the methylthiotransferase family. RimO subfamily. The cofactor is [4Fe-4S] cluster.

The protein localises to the cytoplasm. It carries out the reaction L-aspartate(89)-[ribosomal protein uS12]-hydrogen + (sulfur carrier)-SH + AH2 + 2 S-adenosyl-L-methionine = 3-methylsulfanyl-L-aspartate(89)-[ribosomal protein uS12]-hydrogen + (sulfur carrier)-H + 5'-deoxyadenosine + L-methionine + A + S-adenosyl-L-homocysteine + 2 H(+). Its function is as follows. Catalyzes the methylthiolation of an aspartic acid residue of ribosomal protein uS12. This chain is Ribosomal protein uS12 methylthiotransferase RimO, found in Roseiflexus sp. (strain RS-1).